Consider the following 231-residue polypeptide: 3-oxoadipate CoA-transferase subunit A (231 aa).

25–31 provides a ligand contact to CoA; that stretch reads GGFGTAG.

Belongs to the 3-oxoacid CoA-transferase subunit A family. As to quaternary structure, heterodimer.

It catalyses the reaction 3-oxoadipate + succinyl-CoA = 3-oxoadipyl-CoA + succinate. The protein operates within aromatic compound metabolism; beta-ketoadipate pathway; acetyl-CoA and succinyl-CoA from 3-oxoadipate: step 1/2. This Pseudomonas putida (Arthrobacter siderocapsulatus) protein is 3-oxoadipate CoA-transferase subunit A (pcaI).